A 705-amino-acid polypeptide reads, in one-letter code: MGTEEKMTRSDIDLNEPAFYNNRELSWLAFNERVLEEAIDERNPLLERLKFLAIFSSNLDEFFMVRVAGLKDQVKAGFNKPENKAGLTPKQQLRQISERNHQLVQLQDRVYTETIIPMLSQHGIQFLTFDELSDKQRSFLEKRFDHYIFPVLTPMAVDAYRPFPMLLNKSLNLAVVIKNKESDSREQLAIVQVPSVLNRFILLPCEDGKNQFILLENVISYFIEKLFKGYTVKSVSPFRITRNADLPIHEEGARDLLREIEKELKKRKWGAAVRLEMQEGLMDPNVLKLLLDVLEIHKNDVYSLQGPLDLTFLFKLYNRLIVDYEHLTNETLIPQPPEDLIGETNIFDAILKRDIFLHHPYESFQPVIDFIATAAEDPQVLAIKQTLYRVSGDSPIINALARAAENGKQVTVLVELKARFDEENNIQWAKKLEKSGVHVIYGITGLKTHSKITLVVRHHNDEIQRFVHLGTGNYNDSTAKLYTDMGLLTADEEFGIDATNFFNHLSGYSEKPQWHHLSTAPFEIRDTFLDLIDQEIECHKQNGNGHIIAKMNSLTDKPIILKLYEASRAGVRIELIVRGICCLRPGIPNVSEHIRVFSIVDRFLEHSRIFYFHHGGDDKVFLSSADWMTRNMEKRIEILFPIYQQSTKRRIIEILTITLLDNMKAREQNQFGQYRYVKRNPSEQPVQSQLTFFDMASRFSDSEAE.

N58 provides a ligand contact to ATP. R389 and R419 together coordinate Mg(2+). H449 acts as the Phosphohistidine intermediate in catalysis. ATP is bound by residues Y482, R578, and H606.

Belongs to the polyphosphate kinase 1 (PPK1) family. It depends on Mg(2+) as a cofactor. An intermediate of this reaction is the autophosphorylated ppk in which a phosphate is covalently linked to a histidine residue through a N-P bond.

It catalyses the reaction [phosphate](n) + ATP = [phosphate](n+1) + ADP. Functionally, catalyzes the reversible transfer of the terminal phosphate of ATP to form a long-chain polyphosphate (polyP). In Halalkalibacterium halodurans (strain ATCC BAA-125 / DSM 18197 / FERM 7344 / JCM 9153 / C-125) (Bacillus halodurans), this protein is Polyphosphate kinase.